The primary structure comprises 422 residues: 26S proteasome non-ATPase regulatory subunit 11 (422 aa).

Ala-2 is modified (N-acetylalanine). Phosphoserine is present on residues Ser-14 and Ser-23. The 169-residue stretch at 224-392 (DWKTAYSYFY…GVLIIFDEPP (169 aa)) folds into the PCI domain. Lys-274 participates in a covalent cross-link: Glycyl lysine isopeptide (Lys-Gly) (interchain with G-Cter in SUMO2).

This sequence belongs to the proteasome subunit S9 family. As to quaternary structure, component of the 19S proteasome regulatory particle complex. The 26S proteasome consists of a 20S core particle (CP) and two 19S regulatory subunits (RP). The regulatory particle is made of a lid composed of 9 subunits including PSMD11, a base containing 6 ATPases and few additional components.

Its function is as follows. Component of the 26S proteasome, a multiprotein complex involved in the ATP-dependent degradation of ubiquitinated proteins. This complex plays a key role in the maintenance of protein homeostasis by removing misfolded or damaged proteins, which could impair cellular functions, and by removing proteins whose functions are no longer required. Therefore, the proteasome participates in numerous cellular processes, including cell cycle progression, apoptosis, or DNA damage repair. In the complex, PSMD11 is required for proteasome assembly. Plays a key role in increased proteasome activity in embryonic stem cells (ESCs): its high expression in ESCs promotes enhanced assembly of the 26S proteasome, followed by higher proteasome activity. The sequence is that of 26S proteasome non-ATPase regulatory subunit 11 (Psmd11) from Mus musculus (Mouse).